Consider the following 172-residue polypeptide: Large ribosomal subunit protein uL10 (172 aa).

The protein belongs to the universal ribosomal protein uL10 family. Part of the ribosomal stalk of the 50S ribosomal subunit. The N-terminus interacts with L11 and the large rRNA to form the base of the stalk. The C-terminus forms an elongated spine to which L12 dimers bind in a sequential fashion forming a multimeric L10(L12)X complex.

Functionally, forms part of the ribosomal stalk, playing a central role in the interaction of the ribosome with GTP-bound translation factors. This Chlamydia trachomatis serovar A (strain ATCC VR-571B / DSM 19440 / HAR-13) protein is Large ribosomal subunit protein uL10.